We begin with the raw amino-acid sequence, 898 residues long: Transportin-1 (898 aa).

Residue Met-1 is modified to N-acetylmethionine. HEAT repeat units lie at residues 19-46 (GLQQ…QKLE), 51-89 (YPDF…AHFQ), 98-131 (FIKS…KGEL), 137-174 (LLPK…LDSD), 181-211 (NIMI…QFII), 224-251 (FIEN…VMLL), 263-290 (HNIV…FWLT), 306-397 (PKLI…LANV), 405-433 (HILP…GAIA), 445-472 (PELI…TLSR), 486-519 (LKPL…EEEA), 527-560 (LAYI…ADSV), 568-606 (EYIQ…TALQ), 614-665 (EPVY…GLGG), 676-707 (ILTL…KACF), 715-748 (ADFM…IQMG), 756-791 (PMVL…YVCP), 799-832 (QQFI…ISVN), 841-872 (IFFC…KNQV), and 875-895 (ENWR…LAAF). The 69-residue stretch at 41–109 (VQQKLEQLNQ…KSECLNNIGD (69 aa)) folds into the Importin N-terminal domain. The interval 347–374 (FHRSRTVAQQHDEDGIEEEDDDDDEIDD) is disordered. The segment covering 360–374 (DGIEEEDDDDDEIDD) has biased composition (acidic residues).

Belongs to the importin beta family. Importin beta-2 subfamily. In terms of assembly, identified in a complex that contains TNPO1, RAN and RANBP1. Binds HNRPA1, HNRPA2, HNRNPDL, RPS7, RPL5 and RAN. Interacts with H2A, H2B, H3 and H4 histones. Interacts with isoform 1 and isoform 5 of ADAR/ADAR1 (via DRBM 3 domain). Interacts with SNAI1 (via zinc fingers); the interaction mediates SNAI1 nuclear import. Interacts with SNAI2 (via zinc fingers). Interacts with RPL23A (via BIB domain) and SRP19; this interaction is involved in RPL23A and SRP19 import into the nucleus. Interacts (via HEAT repeats 8-12) with BAP1 (via non-classical PY-NLS); this interaction is direct, is involved in BAP1 nuclear import and disrupts BAP1 homodimerization. As to quaternary structure, (Microbial infection) Binds to HIV-1 Rev.

Its subcellular location is the cytoplasm. The protein localises to the nucleus. Its function is as follows. Functions in nuclear protein import as nuclear transport receptor. Serves as receptor for nuclear localization signals (NLS) in cargo substrates. May mediate docking of the importin/substrate complex to the nuclear pore complex (NPC) through binding to nucleoporin and the complex is subsequently translocated through the pore by an energy requiring, Ran-dependent mechanism. At the nucleoplasmic side of the NPC, Ran binds to the importin, the importin/substrate complex dissociates and importin is re-exported from the nucleus to the cytoplasm where GTP hydrolysis releases Ran. The directionality of nuclear import is thought to be conferred by an asymmetric distribution of the GTP- and GDP-bound forms of Ran between the cytoplasm and nucleus. Involved in nuclear import of M9-containing proteins. In vitro, binds directly to the M9 region of the heterogeneous nuclear ribonucleoproteins (hnRNP), A1 and A2 and mediates their nuclear import. Involved in hnRNP A1/A2 nuclear export. Mediates the nuclear import of ribosomal proteins RPL23A, RPS7 and RPL5. In vitro, mediates nuclear import of H2A, H2B, H3 and H4 histones. In vitro, mediates nuclear import of SRP19. Mediates nuclear import of ADAR/ADAR1 isoform 1 and isoform 5 in a RanGTP-dependent manner. Main mediator of PR-DUB complex component BAP1 nuclear import; acts redundantly with the karyopherins KPNA1 and KPNA2. Functionally, (Microbial infection) In case of HIV-1 infection, binds and mediates the nuclear import of HIV-1 Rev. In Homo sapiens (Human), this protein is Transportin-1 (TNPO1).